Consider the following 251-residue polypeptide: MTVSINEVSKYFWKQTGTVQVLENINFQLEKGDFVTVIGPSGCGKSTLLKIVAGLDNDFEGEIIIDGERITKPSKKQGFIFQEHRLFPWLTVEENIAADLSLKDKYVKDKVKEWVEIVRLDGFEKSYPKEISGGMSQRVAIARALLRDPSVLLLDEPFGALDAFTRSHLQEVLLNIWEQKKTTMIFVTHDIDEAIYLSNRIVIMSAKPGEIHKVIENNLSYPRNKTSQSFQQLRTKVLQQFEHGGLIQTSI.

An ABC transporter domain is found at 3–231; the sequence is VSINEVSKYF…PRNKTSQSFQ (229 aa). ATP is bound at residue 39 to 46; sequence GPSGCGKS.

The protein belongs to the ABC transporter superfamily. Aliphatic sulfonates importer (TC 3.A.1.17.2) family. The complex is composed of two ATP-binding proteins (SsuB), two transmembrane proteins (SsuC) and a solute-binding protein (SsuA).

The protein resides in the cell membrane. It carries out the reaction ATP + H2O + aliphatic sulfonate-[sulfonate-binding protein]Side 1 = ADP + phosphate + aliphatic sulfonateSide 2 + [sulfonate-binding protein]Side 1.. Part of the ABC transporter complex SsuABC involved in aliphatic sulfonates import. Responsible for energy coupling to the transport system. The chain is Aliphatic sulfonates import ATP-binding protein SsuB from Bacillus anthracis.